A 493-amino-acid polypeptide reads, in one-letter code: Ketol-acid reductoisomerase (NADP(+)) (493 aa).

One can recognise a KARI N-terminal Rossmann domain in the interval 14 to 208 (LDQLGRCRFM…GGDRAGVLES (195 aa)). Residues 45 to 48 (CGAQ), Arg68, Arg76, Ser78, and 108 to 110 (DKQ) each bind NADP(+). His132 is an active-site residue. Residue Gly158 participates in NADP(+) binding. KARI C-terminal knotted domains follow at residues 209–345 (SFVA…SPKA) and 346–486 (DGIK…MTDM). Positions 217, 221, 390, and 394 each coordinate Mg(2+). Ser415 lines the substrate pocket.

This sequence belongs to the ketol-acid reductoisomerase family. Mg(2+) serves as cofactor.

It catalyses the reaction (2R)-2,3-dihydroxy-3-methylbutanoate + NADP(+) = (2S)-2-acetolactate + NADPH + H(+). The enzyme catalyses (2R,3R)-2,3-dihydroxy-3-methylpentanoate + NADP(+) = (S)-2-ethyl-2-hydroxy-3-oxobutanoate + NADPH + H(+). It participates in amino-acid biosynthesis; L-isoleucine biosynthesis; L-isoleucine from 2-oxobutanoate: step 2/4. Its pathway is amino-acid biosynthesis; L-valine biosynthesis; L-valine from pyruvate: step 2/4. Functionally, involved in the biosynthesis of branched-chain amino acids (BCAA). Catalyzes an alkyl-migration followed by a ketol-acid reduction of (S)-2-acetolactate (S2AL) to yield (R)-2,3-dihydroxy-isovalerate. In the isomerase reaction, S2AL is rearranged via a Mg-dependent methyl migration to produce 3-hydroxy-3-methyl-2-ketobutyrate (HMKB). In the reductase reaction, this 2-ketoacid undergoes a metal-dependent reduction by NADPH to yield (R)-2,3-dihydroxy-isovalerate. The protein is Ketol-acid reductoisomerase (NADP(+)) of Actinobacillus pleuropneumoniae serotype 3 (strain JL03).